The chain runs to 206 residues: NADH-quinone oxidoreductase subunit C (206 aa).

Belongs to the complex I 30 kDa subunit family. In terms of assembly, NDH-1 is composed of 14 different subunits. Subunits NuoB, C, D, E, F, and G constitute the peripheral sector of the complex.

Its subcellular location is the cell inner membrane. It catalyses the reaction a quinone + NADH + 5 H(+)(in) = a quinol + NAD(+) + 4 H(+)(out). Functionally, NDH-1 shuttles electrons from NADH, via FMN and iron-sulfur (Fe-S) centers, to quinones in the respiratory chain. The immediate electron acceptor for the enzyme in this species is believed to be ubiquinone. Couples the redox reaction to proton translocation (for every two electrons transferred, four hydrogen ions are translocated across the cytoplasmic membrane), and thus conserves the redox energy in a proton gradient. The polypeptide is NADH-quinone oxidoreductase subunit C (Bordetella avium (strain 197N)).